A 186-amino-acid polypeptide reads, in one-letter code: Der GTPase-activating protein YihI (186 aa).

Residues 39–77 (LDAKAREDKKKRKHKGLASGSRHSAVEEKANKLQNEIKD) form a disordered region. Positions 62–77 (SAVEEKANKLQNEIKD) are enriched in basic and acidic residues.

This sequence belongs to the YihI family. Interacts with Der.

In terms of biological role, a GTPase-activating protein (GAP) that modifies Der/EngA GTPase function. May play a role in ribosome biogenesis. The protein is Der GTPase-activating protein YihI of Haemophilus influenzae (strain 86-028NP).